The chain runs to 918 residues: Aconitase-ribosomal protein bL21m fusion protein (918 aa).

The transit peptide at 1 to 30 (MATFARMKLCLSGSSQAIPSKGISLVAARF) directs the protein to the mitochondrion. Residues 31-811 (QSTASRASYV…IDSIKQQPDH (781 aa)) are homocitrate dehydratase, mitochondrial. Residues Q105 and 198 to 200 (DSH) each bind substrate. C394, C457, and C460 together coordinate [4Fe-4S] cluster. Residues R484, R489, K619, and 680-681 (AR) contribute to the substrate site. The segment at 812-918 (YADAYIFNRH…ILRVTELKLN (107 aa)) is large ribosomal subunit protein bL21m.

The protein in the N-terminal section; belongs to the aconitase/IPM isomerase family. In the C-terminal section; belongs to the bacterial ribosomal protein bL21 family. Component of the mitochondrial large ribosomal subunit (mt-LSU). Mature yeast 74S mitochondrial ribosomes consist of a small (37S) and a large (54S) subunit. The 37S small subunit contains a 15S ribosomal RNA (15S mt-rRNA) and at least 32 different proteins. The 54S large subunit contains a 21S rRNA (21S mt-rRNA) and at least 45 different proteins. [4Fe-4S] cluster serves as cofactor.

The protein localises to the mitochondrion. It localises to the nucleus. It catalyses the reaction (2R)-homocitrate = cis-homoaconitate + H2O. Its pathway is amino-acid biosynthesis; L-lysine biosynthesis via AAA pathway; L-alpha-aminoadipate from 2-oxoglutarate: step 2/5. Its function is as follows. Catalyzes the reversible dehydration of (R)-homocitrate to cis-homoaconitate, a step in the alpha-aminoadipate pathway for lysine biosynthesis. In terms of biological role, component of the mitochondrial ribosome (mitoribosome), a dedicated translation machinery responsible for the synthesis of mitochondrial genome-encoded proteins, including at least some of the essential transmembrane subunits of the mitochondrial respiratory chain. The mitoribosomes are attached to the mitochondrial inner membrane and translation products are cotranslationally integrated into the membrane. The protein is Aconitase-ribosomal protein bL21m fusion protein (aco2) of Schizosaccharomyces pombe (strain 972 / ATCC 24843) (Fission yeast).